Consider the following 627-residue polypeptide: MATVRICVCGDESTGKSSLIASLVKDQFVNNKIQPVLPQITIPPSIGTPENVSTTIVDTSARPQDRTTLRKEIRKCNVILLVYADHYSYERVALFWMPYFRSLGVNVPVVLCANKSDLVGQGTTPQVVEEELLPVMAEFREVDSCIRTSARDHRNVNEVFFLCQKAVTHPIAPLFDYKEGHLKPLCINALKRIFYLCDKDQDGYLNEQEMRDFQARCFDKPLTTDDLDNIKLSIAKSLPASDLEKGIDLPGFLQLNKLYAEKGRHETIWIILRKFHYTDSLSLEDKFIRPKFEVPEYSSAELSPAGYRFFVDLFLIFDKDNDGGLNDEELEALFAPAPGLPSSWTDSSFPSSTVRNEAGHVTLQGWLAQWSMTTFIEPKTTIEYLAYLGFEPSNPKDSITAALKITKPRKRRSRLGRVERNVVLCYVLGASGAGKSALLDSFLNRPFYGLYHPTIKPRRAVNSVELPGGKQVYLILEELGELEPAILENRAKLDACDLICYAYDSSDPDSFSHIVDLRKKYPHLDELPSIYTALKADKDKTNQRCELQPDQYTSSLSMSLPLHVSVTWGSISELFVAYADAATTPSTAFPRSNEEGPDRTSLYIALGATACAGVAALTIWRRATNAL.

In terms of domain architecture, Miro 1 spans 1 to 169 (MATVRICVCG…FFLCQKAVTH (169 aa)). The Cytoplasmic portion of the chain corresponds to 1-599 (MATVRICVCG…PRSNEEGPDR (599 aa)). GTP-binding positions include 10 to 17 (GDESTGKS), 58 to 62 (DTSAR), and 114 to 117 (NKSD). EF-hand domains follow at residues 185–220 (LCINALKRIFYLCDKDQDGYLNEQEMRDFQARCFDK) and 305–340 (AGYRFFVDLFLIFDKDNDGGLNDEELEALFAPAPGL). Ca(2+) is bound by residues aspartate 198, aspartate 200, aspartate 202, tyrosine 204, glutamate 209, aspartate 318, aspartate 320, aspartate 322, and glutamate 329. A Miro 2 domain is found at 420–584 (RNVVLCYVLG…FVAYADAATT (165 aa)). GTP is bound by residues 429 to 436 (GASGAGKS), 465 to 469 (ELPGG), and 534 to 537 (LKAD). A helical; Anchor for type IV membrane protein transmembrane segment spans residues 600–620 (TSLYIALGATACAGVAALTIW). At 621 to 627 (RRATNAL) the chain is on the mitochondrial intermembrane side.

The protein belongs to the mitochondrial Rho GTPase family.

The protein resides in the mitochondrion outer membrane. In terms of biological role, mitochondrial GTPase involved in mitochondrial trafficking. Probably involved in control of anterograde transport of mitochondria and their subcellular distribution. The polypeptide is Mitochondrial Rho GTPase 1 (GEM1) (Gibberella zeae (strain ATCC MYA-4620 / CBS 123657 / FGSC 9075 / NRRL 31084 / PH-1) (Wheat head blight fungus)).